We begin with the raw amino-acid sequence, 542 residues long: Valine N-monooxygenase 1 (542 aa).

Residues 1-21 are Cytoplasmic-facing; it reads MAMNVSTTIGLLNATSFASSS. The chain crosses the membrane as a helical; Signal-anchor for type II membrane protein span at residues 22 to 42; it reads SINTVKILFVTLFISIVSTIV. The Lumenal segment spans residues 43-542; sequence KLQKSAANKE…LAPHLYPTSP (500 aa). N-linked (GlcNAc...) asparagine glycosylation is present at N278. C478 contributes to the heme binding site. The N-linked (GlcNAc...) asparagine glycan is linked to N506.

It belongs to the cytochrome P450 family. Heme serves as cofactor. As to expression, expressed in the epidermis, the next two cortex cell layers, the endodermis and the pericycle of leaf petioles. Strong expression around the laticifers among the phloem cells and in parenchymatic cells between the protoxylem and the metaxylem cells. In the leaves, preferentially expressed in the mesophyll cells adjacent to the epidermis.

The protein localises to the microsome membrane. The enzyme catalyses L-valine + 2 reduced [NADPH--hemoprotein reductase] + 2 O2 = (E)-2-methylpropanal oxime + 2 oxidized [NADPH--hemoprotein reductase] + CO2 + 3 H2O + 2 H(+). It carries out the reaction L-valine + reduced [NADPH--hemoprotein reductase] + O2 = N-hydroxy-L-valine + oxidized [NADPH--hemoprotein reductase] + H2O + 2 H(+). It catalyses the reaction N-hydroxy-L-valine + reduced [NADPH--hemoprotein reductase] + O2 = N,N-dihydroxy-L-valine + oxidized [NADPH--hemoprotein reductase] + H2O + H(+). The catalysed reaction is L-isoleucine + 2 reduced [NADPH--hemoprotein reductase] + 2 O2 = (1E,2S)-2-methylbutanal oxime + 2 oxidized [NADPH--hemoprotein reductase] + CO2 + 3 H2O + 2 H(+). The enzyme catalyses L-isoleucine + reduced [NADPH--hemoprotein reductase] + O2 = N-hydroxy-L-isoleucine + oxidized [NADPH--hemoprotein reductase] + H2O + 2 H(+). It carries out the reaction N-hydroxy-L-isoleucine + reduced [NADPH--hemoprotein reductase] + O2 = N,N-dihydroxy-L-isoleucine + oxidized [NADPH--hemoprotein reductase] + H2O + H(+). It participates in secondary metabolite biosynthesis. Its activity is regulated as follows. Inhibited by tetcyclasis but not by 1-aminobenzotriazole (ABT). Functionally, involved in the biosynthesis of the cyanogenic glucosides linamarin and lotaustralin. Can use L-valine or L-isoleucine as substrate, but not L-leucine, L-phenylalanine, L-tyrosine, D-valine or D-isoleucine. Catalyzes multi-step reactions starting with two successive N-hydroxylations using L-valine and L-isoleucine as substrates leading to the formation of N,N-dihydroxy-L-valine and N,N-dihydroxy-L-isoleucine, respectively; following spontaneous reactions lead to the production of (E)-2-methylpropanal oxime and (1E,2S)-2-methylbutanal oxime, respectively. The sequence is that of Valine N-monooxygenase 1 from Manihot esculenta (Cassava).